Reading from the N-terminus, the 236-residue chain is UPF0280 protein Mlab_0453 (236 aa).

The protein belongs to the UPF0280 family.

This Methanocorpusculum labreanum (strain ATCC 43576 / DSM 4855 / Z) protein is UPF0280 protein Mlab_0453.